Here is a 233-residue protein sequence, read N- to C-terminus: Germin-like protein 3-7 (233 aa).

An N-terminal signal peptide occupies residues 1–35 (MSSSSSMECTGNMSAAPLLVLTVAVLAVLASTCAA). A disulfide bond links C44 and C63. Residues 77-225 (AGLAAAGSTD…SFQVDAEIIK (149 aa)) form the Cupin type-1 domain. Mn(2+) contacts are provided by H125, H127, E132, and H171. Residue N178 is glycosylated (N-linked (GlcNAc...) asparagine).

Belongs to the germin family. As to quaternary structure, oligomer (believed to be a pentamer but probably hexamer).

The protein localises to the secreted. It is found in the extracellular space. The protein resides in the apoplast. Its function is as follows. May play a role in plant defense. Probably has no oxalate oxidase activity even if the active site is conserved. The protein is Germin-like protein 3-7 (GER7) of Oryza sativa subsp. japonica (Rice).